We begin with the raw amino-acid sequence, 285 residues long: Dermonecrotic toxin LlSicTox-alphaIII1ii (285 aa).

The active site involves His-12. Mg(2+)-binding residues include Glu-32 and Asp-34. His-47 (nucleophile) is an active-site residue. Cys-51 and Cys-57 are disulfide-bonded. Asp-91 contacts Mg(2+).

It belongs to the arthropod phospholipase D family. Class I subfamily. The cofactor is Mg(2+). Expressed by the venom gland.

It is found in the secreted. It carries out the reaction an N-(acyl)-sphingosylphosphocholine = an N-(acyl)-sphingosyl-1,3-cyclic phosphate + choline. It catalyses the reaction an N-(acyl)-sphingosylphosphoethanolamine = an N-(acyl)-sphingosyl-1,3-cyclic phosphate + ethanolamine. The enzyme catalyses a 1-acyl-sn-glycero-3-phosphocholine = a 1-acyl-sn-glycero-2,3-cyclic phosphate + choline. The catalysed reaction is a 1-acyl-sn-glycero-3-phosphoethanolamine = a 1-acyl-sn-glycero-2,3-cyclic phosphate + ethanolamine. Its function is as follows. Dermonecrotic toxins cleave the phosphodiester linkage between the phosphate and headgroup of certain phospholipids (sphingolipid and lysolipid substrates), forming an alcohol (often choline) and a cyclic phosphate. This toxin acts on sphingomyelin (SM) with high activity (56.8 U/mg). It may also act on ceramide phosphoethanolamine (CPE), lysophosphatidylcholine (LPC) and lysophosphatidylethanolamine (LPE), but not on lysophosphatidylserine (LPS), and lysophosphatidylglycerol (LPG). It acts by transphosphatidylation, releasing exclusively cyclic phosphate products as second products. Induces dermonecrosis, hemolysis, increased vascular permeability, edema, inflammatory response, and platelet aggregation. Is lethal to mice. The protein is Dermonecrotic toxin LlSicTox-alphaIII1ii of Loxosceles laeta (South American recluse spider).